We begin with the raw amino-acid sequence, 497 residues long: Galactose-1-phosphate uridylyltransferase (497 aa).

It belongs to the galactose-1-phosphate uridylyltransferase type 2 family.

The protein localises to the cytoplasm. The catalysed reaction is alpha-D-galactose 1-phosphate + UDP-alpha-D-glucose = alpha-D-glucose 1-phosphate + UDP-alpha-D-galactose. It participates in carbohydrate metabolism; galactose metabolism. The protein is Galactose-1-phosphate uridylyltransferase of Clostridium acetobutylicum (strain ATCC 824 / DSM 792 / JCM 1419 / IAM 19013 / LMG 5710 / NBRC 13948 / NRRL B-527 / VKM B-1787 / 2291 / W).